A 282-amino-acid chain; its full sequence is 2-dehydro-3-deoxyphosphooctonate aldolase (282 aa).

It belongs to the KdsA family.

The protein localises to the cytoplasm. The catalysed reaction is D-arabinose 5-phosphate + phosphoenolpyruvate + H2O = 3-deoxy-alpha-D-manno-2-octulosonate-8-phosphate + phosphate. It functions in the pathway carbohydrate biosynthesis; 3-deoxy-D-manno-octulosonate biosynthesis; 3-deoxy-D-manno-octulosonate from D-ribulose 5-phosphate: step 2/3. It participates in bacterial outer membrane biogenesis; lipopolysaccharide biosynthesis. This chain is 2-dehydro-3-deoxyphosphooctonate aldolase, found in Shewanella sp. (strain ANA-3).